Consider the following 83-residue polypeptide: Acyl carrier protein MmaB (83 aa).

A Carrier domain is found at 3–83; the sequence is DPVRQRILLA…LSQSELESPT (81 aa). Residue Ser-39 is modified to O-(pantetheine 4'-phosphoryl)serine.

This sequence belongs to the acyl carrier protein (ACP) family. Requires pantetheine 4'-phosphate as cofactor.

The protein operates within lipid metabolism; fatty acid metabolism. In terms of biological role, acyl-carrier protein (ACP) involved in the biosynthesis of a unique class of isonitrile lipopeptides (INLPs) that seem to play a role in metal acquisition in M.marinum. Is the dedicated ACP for the loading of activated acyl groups catalyzed by MmaC. The protein is Acyl carrier protein MmaB of Mycobacterium marinum (strain ATCC BAA-535 / M).